Here is a 1203-residue protein sequence, read N- to C-terminus: DNA-directed RNA polymerase subunit beta' (1203 aa).

Cys60, Cys62, Cys75, and Cys78 together coordinate Zn(2+). 3 residues coordinate Mg(2+): Asp449, Asp451, and Asp453. Zn(2+)-binding residues include Cys818, Cys892, Cys899, and Cys902.

It belongs to the RNA polymerase beta' chain family. The RNAP catalytic core consists of 2 alpha, 1 beta, 1 beta' and 1 omega subunit. When a sigma factor is associated with the core the holoenzyme is formed, which can initiate transcription. It depends on Mg(2+) as a cofactor. The cofactor is Zn(2+).

It carries out the reaction RNA(n) + a ribonucleoside 5'-triphosphate = RNA(n+1) + diphosphate. In terms of biological role, DNA-dependent RNA polymerase catalyzes the transcription of DNA into RNA using the four ribonucleoside triphosphates as substrates. This is DNA-directed RNA polymerase subunit beta' from Bacillus cereus (strain ATCC 14579 / DSM 31 / CCUG 7414 / JCM 2152 / NBRC 15305 / NCIMB 9373 / NCTC 2599 / NRRL B-3711).